The following is a 143-amino-acid chain: Large ribosomal subunit protein uL13 (143 aa).

This sequence belongs to the universal ribosomal protein uL13 family. In terms of assembly, part of the 50S ribosomal subunit.

Its function is as follows. This protein is one of the early assembly proteins of the 50S ribosomal subunit, although it is not seen to bind rRNA by itself. It is important during the early stages of 50S assembly. The sequence is that of Large ribosomal subunit protein uL13 from Carboxydothermus hydrogenoformans (strain ATCC BAA-161 / DSM 6008 / Z-2901).